We begin with the raw amino-acid sequence, 241 residues long: NH(3)-dependent NAD(+) synthetase (241 aa).

Residue 29 to 36 participates in ATP binding; that stretch reads GISGGIDS. A Mg(2+)-binding site is contributed by aspartate 35. Arginine 110 is a binding site for deamido-NAD(+). Glutamate 135 is a Mg(2+) binding site. Positions 143 and 150 each coordinate deamido-NAD(+). Lysine 159 and serine 181 together coordinate ATP. Residue 226 to 227 coordinates deamido-NAD(+); it reads HK.

This sequence belongs to the NAD synthetase family. In terms of assembly, homodimer.

The enzyme catalyses deamido-NAD(+) + NH4(+) + ATP = AMP + diphosphate + NAD(+) + H(+). Its pathway is cofactor biosynthesis; NAD(+) biosynthesis; NAD(+) from deamido-NAD(+) (ammonia route): step 1/1. Functionally, catalyzes the ATP-dependent amidation of deamido-NAD to form NAD. Uses ammonia as a nitrogen source. The protein is NH(3)-dependent NAD(+) synthetase of Finegoldia magna (strain ATCC 29328 / DSM 20472 / WAL 2508) (Peptostreptococcus magnus).